We begin with the raw amino-acid sequence, 262 residues long: MADDEDDYMSDAFLNQISDVRPGVPMVKRVKEAIKKEALHKEKDIQNRQKSFKEQEKESREAALQSSIGSQNKGFALLQKMGYKAGQGLGKEGAGRVEPVPLNIKTDRGGIGMEEVKKRKADEELQNYRRKVHMKQHLEKKSIEDFRVRKRTEREERQTQGDLRKSQRACEQLDNQKGITVPRDCWYWPEVEKNEESELLEEEIKTEESDEEEELTPLDKLQFLTSYLRGVHYYCIWCGTAYNDEEDLGTNCPGDTAADHDD.

3 stretches are compositionally biased toward basic and acidic residues: residues 39–61 (LHKEKDIQNRQKSFKEQEKESRE), 114–127 (EEVKKRKADEELQN), and 136–165 (QHLEKKSIEDFRVRKRTEREERQTQGDLRK). Disordered regions lie at residues 39 to 71 (LHKEKDIQNRQKSFKEQEKESREAALQSSIGSQ) and 88 to 169 (GLGK…SQRA). The stretch at 41 to 62 (KEKDIQNRQKSFKEQEKESREA) forms a coiled coil. Residues 70–116 (SQNKGFALLQKMGYKAGQGLGKEGAGRVEPVPLNIKTDRGGIGMEEV) enclose the G-patch domain.

Belongs to the GPATCH11 family.

The protein resides in the chromosome. Its subcellular location is the centromere. The protein localises to the kinetochore. In Danio rerio (Zebrafish), this protein is G patch domain-containing protein 11 (gpatch11).